Consider the following 478-residue polypeptide: Probable serine carboxypeptidase CPVL (478 aa).

A signal peptide spans 1 to 22 (MVRAKWKMVVSLILFMVSPGDG). N-linked (GlcNAc...) asparagine glycosylation is found at Asn83 and Asn134. Residue Ser206 is part of the active site. N-linked (GlcNAc...) asparagine glycosylation is found at Asn309 and Asn350. Catalysis depends on residues Asp390 and His450.

The protein belongs to the peptidase S10 family.

Its function is as follows. May be involved in the digestion of phagocytosed particles in the lysosome, participation in an inflammatory protease cascade, and trimming of peptides for antigen presentation. The polypeptide is Probable serine carboxypeptidase CPVL (Cpvl) (Mus musculus (Mouse)).